Reading from the N-terminus, the 214-residue chain is Rhodanese-like domain-containing protein 10 (214 aa).

The Rhodanese domain occupies 58–182; that stretch reads ASEGYILLDV…VSEGDFPEIE (125 aa). The Cysteine persulfide intermediate role is filled by Cys142. A helical membrane pass occupies residues 190–206; that stretch reads ATIGGVSFYLLKLLVLL.

It is found in the membrane. This chain is Rhodanese-like domain-containing protein 10 (STR10), found in Arabidopsis thaliana (Mouse-ear cress).